The chain runs to 316 residues: Acetaldehyde dehydrogenase (316 aa).

11 to 14 (SGNI) is an NAD(+) binding site. Residue cysteine 131 is the Acyl-thioester intermediate of the active site. Residues 162 to 170 (SAGPGTRAN) and asparagine 289 each bind NAD(+).

The protein belongs to the acetaldehyde dehydrogenase family. In terms of assembly, interacts with MhpE.

The catalysed reaction is acetaldehyde + NAD(+) + CoA = acetyl-CoA + NADH + H(+). The protein operates within aromatic compound metabolism; 3-phenylpropanoate degradation. Its function is as follows. Catalyzes the conversion of acetaldehyde to acetyl-CoA, using NAD(+) and coenzyme A. Is the final enzyme in the meta-cleavage pathway for the degradation of aromatic compounds. The protein is Acetaldehyde dehydrogenase of Shigella sonnei (strain Ss046).